Consider the following 142-residue polypeptide: Hemoglobin subunit zeta (142 aa).

Serine 2 carries the N-acetylserine modification. One can recognise a Globin domain in the interval 2 to 142 (SLTKTEGTII…VSSVLTEKYR (141 aa)). Threonine 29 is modified (phosphothreonine). Serine 53 bears the Phosphoserine mark. Histidine 59 contacts heme b. Phosphoserine occurs at positions 73 and 82. Histidine 88 is a binding site for heme b.

This sequence belongs to the globin family. As to quaternary structure, heterotetramer of two zeta chains and beta-type chains.

Its function is as follows. The zeta chain is an alpha-type chain of mammalian embryonic hemoglobin. In Pan troglodytes (Chimpanzee), this protein is Hemoglobin subunit zeta (HBZ1).